The chain runs to 487 residues: MRVFNTLTDKLEEFKPINDKKVGIYACGVTVYDLCHIGHARSAVVFDVIVKYLRYKGYEVKFVKNFTDIDDKIINRANKEGVSWKEIAEKYTGEYYKDMDRLGITRADIEPKATEHINEMIEIIQTLINKGYAYEIEEGQAKSVYFSVEKFPQYGKLSKKKIDELISGARVEVDERKKSPLDFALWKASKPGEPWWDSPWGKGRPGWHIECSAMSIKYLGETFDIHGGGADLIFPHHENEIAQSEAFTGKPFAKYWIHNGFVTINKEKMSKSLGNVLNIRDLLDIYDAEALRLFLLSSHYRSPIEFAHEYIKEAEATVDRVYSTIMRIEDFEKIEINDKSSIEFDKVKAMLENLKPEFEKAMDDDFNTAKALGILFEFIKEINRFMDKKPSQNKEIDFLVTAKRAIKEIGSVLNLFQRQPVDWYRDLLKVKKIAIKEEEINRLIKERTEARKNKDWKKADSIREQLLSKGIILEDKPDRTIWKVKIN.

Zn(2+) is bound at residue Cys-27. A 'HIGH' region motif is present at residues 29–39 (VTVYDLCHIGH). Residues Cys-211, His-236, and Glu-240 each contribute to the Zn(2+) site. Residues 268-272 (KMSKS) carry the 'KMSKS' region motif. Lys-271 is a binding site for ATP.

Belongs to the class-I aminoacyl-tRNA synthetase family. As to quaternary structure, monomer. The cofactor is Zn(2+).

It localises to the cytoplasm. The catalysed reaction is tRNA(Cys) + L-cysteine + ATP = L-cysteinyl-tRNA(Cys) + AMP + diphosphate. This Thermodesulfovibrio yellowstonii (strain ATCC 51303 / DSM 11347 / YP87) protein is Cysteine--tRNA ligase.